The chain runs to 607 residues: DNA mismatch repair protein MutL (607 aa).

This sequence belongs to the DNA mismatch repair MutL/HexB family.

Its function is as follows. This protein is involved in the repair of mismatches in DNA. It is required for dam-dependent methyl-directed DNA mismatch repair. May act as a 'molecular matchmaker', a protein that promotes the formation of a stable complex between two or more DNA-binding proteins in an ATP-dependent manner without itself being part of a final effector complex. This is DNA mismatch repair protein MutL from Gemmatimonas aurantiaca (strain DSM 14586 / JCM 11422 / NBRC 100505 / T-27).